We begin with the raw amino-acid sequence, 307 residues long: 4-hydroxythreonine-4-phosphate dehydrogenase (307 aa).

Substrate contacts are provided by histidine 126 and threonine 127. Histidine 156, histidine 195, and histidine 251 together coordinate a divalent metal cation. 3 residues coordinate substrate: lysine 259, asparagine 268, and arginine 277.

Belongs to the PdxA family. As to quaternary structure, homodimer. Zn(2+) serves as cofactor. Requires Mg(2+) as cofactor. Co(2+) is required as a cofactor.

It localises to the cytoplasm. The enzyme catalyses 4-(phosphooxy)-L-threonine + NAD(+) = 3-amino-2-oxopropyl phosphate + CO2 + NADH. Its pathway is cofactor biosynthesis; pyridoxine 5'-phosphate biosynthesis; pyridoxine 5'-phosphate from D-erythrose 4-phosphate: step 4/5. Functionally, catalyzes the NAD(P)-dependent oxidation of 4-(phosphooxy)-L-threonine (HTP) into 2-amino-3-oxo-4-(phosphooxy)butyric acid which spontaneously decarboxylates to form 3-amino-2-oxopropyl phosphate (AHAP). This chain is 4-hydroxythreonine-4-phosphate dehydrogenase, found in Helicobacter pylori (strain G27).